We begin with the raw amino-acid sequence, 298 residues long: Palmitoyl-protein thioesterase 1 (298 aa).

The N-terminal stretch at 1 to 16 (MRYFPLLLCLLAITTA) is a signal peptide. N20 carries N-linked (GlcNAc...) asparagine glycosylation. 3 disulfide bridges follow: C37-C38, C88-C120, and C144-C151. The Nucleophile role is filled by S107. The active site involves D224. N250 is a glycosylation site (N-linked (GlcNAc...) asparagine). H280 is a catalytic residue.

This sequence belongs to the palmitoyl-protein thioesterase family.

The catalysed reaction is S-hexadecanoyl-L-cysteinyl-[protein] + H2O = L-cysteinyl-[protein] + hexadecanoate + H(+). Removes thioester-linked fatty acyl groups such as palmitate (hexadecanoate) from modified cysteine residues in proteins or peptides. In Caenorhabditis elegans, this protein is Palmitoyl-protein thioesterase 1 (ppt-1).